We begin with the raw amino-acid sequence, 502 residues long: Glycerate kinase (502 aa).

Belongs to the glycerate kinase type-2 family.

It localises to the cytoplasm. The catalysed reaction is (R)-glycerate + ATP = (2R)-3-phosphoglycerate + ADP + H(+). In Danio rerio (Zebrafish), this protein is Glycerate kinase (glyctk).